The chain runs to 257 residues: ECF RNA polymerase sigma factor SigE (257 aa).

The sigma-70 factor domain-2 stretch occupies residues 87 to 153 (MPSWDELVRQ…RITTNLFLDM (67 aa)). Residues 111–114 (NQHD) carry the Polymerase core binding motif. Positions 186-236 (SRLGADLQAALDSLPPEFRAAVVLCDIEGLSYEEIGATLGVKLGTVRSRIH) are sigma-70 factor domain-4. Positions 211–230 (DIEGLSYEEIGATLGVKLGT) form a DNA-binding region, H-T-H motif.

This sequence belongs to the sigma-70 factor family. ECF subfamily. As to quaternary structure, interacts transiently with the RNA polymerase catalytic core formed by RpoA, RpoB, RpoC and RpoZ (2 alpha, 1 beta, 1 beta' and 1 omega subunit) to form the RNA polymerase holoenzyme that can initiate transcription. Interacts (via sigma-70 factor domain 4) with RseA; interaction is abrogated by treatment of cells with H(2)O(2) or detergent.

Sigma factors are initiation factors that promote the attachment of RNA polymerase to specific initiation sites and are then released. Extracytoplasmic function (ECF) sigma factors are held in an inactive form by an anti-sigma factor until released. The polypeptide is ECF RNA polymerase sigma factor SigE (sigE) (Mycolicibacterium smegmatis (strain ATCC 700084 / mc(2)155) (Mycobacterium smegmatis)).